The primary structure comprises 97 residues: TRTDDKPGVNRNMEMQQQQGGFIGHRPRLASFNRASKQLDREKRPVPSGPDPIHHSIPSHAPQHPPSYGKAPYEDDKSIASPGLSNLIGPPPFLDRY.

The disordered stretch occupies residues 1-97 (TRTDDKPGVN…IGPPPFLDRY (97 aa)). 2 positions are modified to hydroxyproline: Pro-47 and Pro-50. O-linked (Ara...) hydroxyproline glycosylation occurs at Pro-50.

Belongs to the CLV3/ESR signal peptide family. In terms of processing, the O-glycosylation (arabinosylation) of the hydroxyproline Pro-50 enhances binding affinity of the ESR2Cp peptide for its receptor. In terms of tissue distribution, seed endosperm.

The protein resides in the secreted. It localises to the extracellular space. In terms of biological role, extracellular signal peptide that regulates cell fate. The protein is CLAVATA3/ESR (CLE)-related protein ESR2-C of Zea mays (Maize).